A 329-amino-acid chain; its full sequence is Vomeronasal type-1 receptor 43 (329 aa).

Residues methionine 1 to threonine 32 lie on the Extracellular side of the membrane. A helical membrane pass occupies residues phenylalanine 33–leucine 53. The Cytoplasmic segment spans residues lysine 54–aspartate 65. The chain crosses the membrane as a helical span at residues leucine 66–alanine 86. Topologically, residues threonine 87–arginine 109 are extracellular. A disulfide bridge connects residues cysteine 101 and cysteine 188. The chain crosses the membrane as a helical span at residues valine 110–leucine 130. Over serine 131 to histidine 147 the chain is Cytoplasmic. The chain crosses the membrane as a helical span at residues isoleucine 148–valine 168. The Extracellular segment spans residues serine 169–glutamate 209. N-linked (GlcNAc...) asparagine glycans are attached at residues asparagine 175 and asparagine 201. The chain crosses the membrane as a helical span at residues tyrosine 210–histidine 230. Residues arginine 231–threonine 255 lie on the Cytoplasmic side of the membrane. A helical transmembrane segment spans residues isoleucine 256 to leucine 276. The Extracellular segment spans residues arginine 277–threonine 285. The helical transmembrane segment at serine 286 to methionine 306 threads the bilayer. At serine 307–histidine 329 the chain is on the cytoplasmic side.

The protein belongs to the G-protein coupled receptor 1 family.

It is found in the cell membrane. Its function is as follows. Putative pheromone receptor implicated in the regulation of social and reproductive behavior. This chain is Vomeronasal type-1 receptor 43 (Vmn1r43), found in Mus musculus (Mouse).